A 167-amino-acid polypeptide reads, in one-letter code: Insertion element IS1 protein InsB (167 aa).

Belongs to the transposase 27 family.

Functionally, absolutely required for transposition of IS1. This is Insertion element IS1 protein InsB (insB) from Escherichia coli.